Consider the following 151-residue polypeptide: MPLKIEDLKPTPGSRKPKKRLGRGIGSGLGKTAGKGHKGEKARGRGKIGRTFEGGQTNIIRRTPKFGFSNAPFKKVYSVVNVETLEKYFSENEEVTPDILLEKKLIKKLNDGVKILGKGEISKPLVVKANIFSQTAREKIEAVGGKIEVIE.

Residues 1 to 51 (MPLKIEDLKPTPGSRKPKKRLGRGIGSGLGKTAGKGHKGEKARGRGKIGRT) are disordered. Residues 23-33 (RGIGSGLGKTA) are compositionally biased toward gly residues.

It belongs to the universal ribosomal protein uL15 family. Part of the 50S ribosomal subunit.

In terms of biological role, binds to the 23S rRNA. The chain is Large ribosomal subunit protein uL15 from Petrotoga mobilis (strain DSM 10674 / SJ95).